Reading from the N-terminus, the 199-residue chain is NAD(P)H dehydrogenase (quinone) (199 aa).

The 187-residue stretch at 4-190 (VLVLYYSAYG…AGARYQGKTI (187 aa)) folds into the Flavodoxin-like domain. Residues 10-15 (SAYGHI) and 78-80 (TRF) contribute to the FMN site. Residue Tyr12 coordinates NAD(+). Trp98 lines the substrate pocket. FMN contacts are provided by residues 113–119 (STATQHG) and His134.

This sequence belongs to the WrbA family. It depends on FMN as a cofactor.

It carries out the reaction a quinone + NADH + H(+) = a quinol + NAD(+). It catalyses the reaction a quinone + NADPH + H(+) = a quinol + NADP(+). The protein is NAD(P)H dehydrogenase (quinone) of Rhodopseudomonas palustris (strain TIE-1).